A 157-amino-acid polypeptide reads, in one-letter code: Endoribonuclease YbeY (157 aa).

Residues histidine 114, histidine 118, and histidine 124 each contribute to the Zn(2+) site.

The protein belongs to the endoribonuclease YbeY family. The cofactor is Zn(2+).

It is found in the cytoplasm. Its function is as follows. Single strand-specific metallo-endoribonuclease involved in late-stage 70S ribosome quality control and in maturation of the 3' terminus of the 16S rRNA. The polypeptide is Endoribonuclease YbeY (Salmonella agona (strain SL483)).